The chain runs to 758 residues: Vitamin K-dependent gamma-carboxylase (758 aa).

The segment at 1-34 (MAVSARPARAPRGPDKVKKDKAAQTSGPRQGSQM) is disordered. Ala2 is subject to N-acetylalanine. Over 2-60 (AVSARPARAPRGPDKVKKDKAAQTSGPRQGSQMGKLLGFEWTDVSSWERLVTLLNRPTD) the chain is Cytoplasmic. Basic and acidic residues predominate over residues 12–22 (RGPDKVKKDKA). Positions 23–33 (AQTSGPRQGSQ) are enriched in polar residues. Residues 61-81 (PASLAVFRFLFGLMMVLDIPQ) traverse the membrane as a helical segment. Over 82–113 (ERGLSSLDRRYLDGLEVCRFPLLDALQPLPLD) the chain is Lumenal. Residues Cys99 and Cys450 are joined by a disulfide bond. Residues 114 to 134 (WMYLVYTIMFLGALGMMLGLC) traverse the membrane as a helical segment. Residues 135–136 (YR) are Cytoplasmic-facing. The chain crosses the membrane as a helical span at residues 137–157 (ISCVLFLLPYWYVFLLDKTSW). The Lumenal portion of the chain corresponds to 158–292 (NNHSYLYGLL…VSYFHCMNSQ (135 aa)). The helical transmembrane segment at 293–313 (LFSIGMFPYVMLASSPLFCSP) threads the bilayer. The Cytoplasmic segment spans residues 314–361 (EWPRKLVAHCPKKLQELLPLRTAPQPSTSCMYKRSRARGSQKPGLRHQ). A helical membrane pass occupies residues 362 to 382 (LSTAFTLLYLLEQLFLPYSHF). Residues 383 to 758 (LTQGYNNWTN…PDSHPVHSEF (376 aa)) lie on the Lumenal side of the membrane. The tract at residues 726 to 758 (RPFEPAGEPSPVNTDSSNPNPPEPDSHPVHSEF) is disordered. A compositionally biased stretch (basic and acidic residues) spans 749–758 (PDSHPVHSEF).

It belongs to the vitamin K-dependent gamma-carboxylase family. Monomer. May interact with CALU.

The protein resides in the endoplasmic reticulum membrane. It catalyses the reaction 4-carboxy-L-glutamyl-[protein] + 2,3-epoxyphylloquinone + H2O + H(+) = phylloquinol + L-glutamyl-[protein] + CO2 + O2. In terms of biological role, mediates the vitamin K-dependent carboxylation of glutamate residues to calcium-binding gamma-carboxyglutamate (Gla) residues with the concomitant conversion of the reduced hydroquinone form of vitamin K to vitamin K epoxide. Catalyzes gamma-carboxylation of various proteins, such as blood coagulation factors (F2, F7, F9 and F10), osteocalcin (BGLAP) or matrix Gla protein (MGP). This is Vitamin K-dependent gamma-carboxylase (GGCX) from Ovis aries (Sheep).